We begin with the raw amino-acid sequence, 88 residues long: UPF0297 protein BT9727_4120 (88 aa).

The protein belongs to the UPF0297 family.

The protein is UPF0297 protein BT9727_4120 of Bacillus thuringiensis subsp. konkukian (strain 97-27).